The primary structure comprises 301 residues: ADP,ATP carrier protein 1 (301 aa).

3 Solcar repeats span residues 8-100 (YGFA…YKQV), 113-203 (RYFL…AKGM), and 210-299 (TSIF…VKAL). 5 consecutive transmembrane segments (helical) span residues 10–39 (FAKD…LLLQ), 77–101 (LANV…KQVF), 112–132 (WRYF…SLCF), 181–201 (VSVQ…DTAK), and 213–233 (FVSW…SYPF). ADP is bound by residues R82 and K94. Residue R237 coordinates ADP. An important for transport activity region spans residues 237 to 242 (RRRMMM). The Nucleotide carrier signature motif signature appears at 237–242 (RRRMMM). A helical transmembrane segment spans residues 276 to 293 (AFSNVLRGTGGALVLVFY).

This sequence belongs to the mitochondrial carrier (TC 2.A.29) family. Monomer.

It is found in the mitochondrion inner membrane. It catalyses the reaction ADP(in) + ATP(out) = ADP(out) + ATP(in). With respect to regulation, the matrix-open state (m-state) is inhibited by the membrane-permeable bongkrekic acid (BKA). The cytoplasmic-open state (c-state) is inhibited by the membrane-impermeable toxic inhibitor carboxyatractyloside (CATR). Its function is as follows. ADP:ATP antiporter that mediates import of ADP into the mitochondrial matrix for ATP synthesis, and export of ATP out to fuel the cell. Cycles between the cytoplasmic-open state (c-state) and the matrix-open state (m-state): operates by the alternating access mechanism with a single substrate-binding site intermittently exposed to either the cytosolic (c-state) or matrix (m-state) side of the inner mitochondrial membrane. This Anopheles gambiae (African malaria mosquito) protein is ADP,ATP carrier protein 1.